A 197-amino-acid polypeptide reads, in one-letter code: MEAFTKHTGRAVPLRRSNVDTDQIIPAHWLKKVTRDGFEDGLFEAWRKDPEFVLNRPEREGATVLVAGPDFGTGSSREHAVWALQNYGFKTVVSSRFADIFRGNSLKNGLLTVVLDQKTVDALWELVERDPQAEITVDLEAREVRAEGVTASFELDENSRWRLLNGLDDISITLQNEADIAAYEAKRPSFKPQTVQV.

The protein belongs to the LeuD family. LeuD type 1 subfamily. Heterodimer of LeuC and LeuD.

The catalysed reaction is (2R,3S)-3-isopropylmalate = (2S)-2-isopropylmalate. The protein operates within amino-acid biosynthesis; L-leucine biosynthesis; L-leucine from 3-methyl-2-oxobutanoate: step 2/4. Functionally, catalyzes the isomerization between 2-isopropylmalate and 3-isopropylmalate, via the formation of 2-isopropylmaleate. In Streptomyces coelicolor (strain ATCC BAA-471 / A3(2) / M145), this protein is 3-isopropylmalate dehydratase small subunit (leuD).